We begin with the raw amino-acid sequence, 1490 residues long: MADADTSSNSSKTNEDRSQEGFGTYQGYTDRVASEVQELARIISHASIQQLKLKRQHSRQESQKSNEQESELSGKLGVIPVDENGNFVDQRLNPNSPEFNAAYWIQNAHKLVSSDIDYFKPVTIGVAYKNLRAYGSASDADYQSTLVNLIPKYLSLFFREYILRHTGPTFDILKPMDGLIKPGELTVVLGRPGAGCSTFLKTIASQTYGYHIDKDSVIRYNSLTPHEIKKHYRGEVVYCAETENHFPQLTVGDTLEFAAKMRTPQNRPLGVSRDAYARHLAAVVMAVYGLSHTRNTKVGNDFIRGVSGGERKRVSIAEITLNNAMVQCWDNSTRGLDSATALEFIRALKASADIVHTTPLVAIYQCSQDAYDLFDKVVLMYQGYQIYFGSAKKAKQYFIDMGYECPQRQTTADFLTSLTNPAERIVRQGFEGKVPQTPQEFYEYWKKSPEGQQIVADVDQYLTEHSSAAEKEAIKEAHQARQSDHLKPASPYTVSFFMQVRYIAHRNILRIKGNPSIHLFQIFGNIGMSFILSSIFYNLPTATSSFYHRTAALFFAVLFNAFSCLLEIFSLYEARSIVEKHKKYALYHPAADAFASIVTELPTKFIIAIGFNLVYYFMVNFRRTPGNFFFYLLINFSATLAMSHIFRTIGAATKTLQEAMTPAAILLLALTIFTGFVIPTPNMHGWCRWINYLDPLAYAFESLIANEFHNRDFECSQYVPSGGSYPTAGPNRICTPVGSVPGQDFVDGTRYMEMSFDYRNSHKWRNFGIVIGFIVFFFCTYILLCEINKGAMQKGEILLFQQRALKKRKKANNDIESGEIEKVTPEFDNEYENNQDKMLQSGGDTFFWRDLTYQVKIKSEDRVILDHVSGWVKPGQVTALMGASGAGKTTLLNALSDRLTTGVVTEGIRLVNGRPLDSSFQRSIGYVQQQDLHLETSTVREALEFAAYLRQPKSVSRKEKNEYVDYIIRLLEMEQYADAVVGVSGEGLNVEQRKRLSIGVELVAKPKLLVFLDEPTSGLDSQTAWSICKLIRKLADNGQAILCTIHQPSAILLAEFDRLLFLQRGGQTVYFGDLGKNFTTLINYFEKYGAPKCPPEANPAEWMLEVIGAAPGSKANQDYYDVWLKSSEFQEMNSELDLMSEELVKKPLDDDPDRLKPYAAPYWEQYLFVTKRVFEQNWRTPSYLYSKFLLVVTSSLFNGFSFYKADRSLQGLQNQMFSVFMFLVILHTLIQQYLPTFVSQRDLYEVRERPSKTFSWITFIAAQVTAEIPWNIICGTLGYFCWYYPVGLYQNATYTNTVHQRGAFMWFAIVLFFIYTSTLAQLCISFLEIDDNAANLSVLLFTMCLAFCGVLVTKEQLPGFWVFMYRCSPFTYLVSVMLSVGLVDAPVTCAAKEYLRFSPPQGYTCMQYMEPYMKVAGGYLLNENSTTECEFCTMKVTNVFLKMIGSDYSKRGRDIGIYIAFIGINIIGTFILYWFARVPKNFDIKLRRKR.

Polar residues predominate over residues 1–12 (MADADTSSNSSK). Disordered regions lie at residues 1–26 (MADADTSSNSSKTNEDRSQEGFGTYQ) and 53–75 (LKRQHSRQESQKSNEQESELSGK). Topologically, residues 1-516 (MADADTSSNS…NILRIKGNPS (516 aa)) are cytoplasmic. Basic and acidic residues predominate over residues 58-67 (SRQESQKSNE). Positions 151–407 (PKYLSLFFRE…FIDMGYECPQ (257 aa)) constitute an ABC transporter 1 domain. 6 helical membrane-spanning segments follow: residues 517–537 (IHLFQIFGNIGMSFILSSIFY), 551–571 (AALFFAVLFNAFSCLLEIFSL), 601–621 (LPTKFIIAIGFNLVYYFMVNF), 626–646 (GNFFFYLLINFSATLAMSHIF), 659–679 (AMTPAAILLLALTIFTGFVIP), and 767–787 (FGIVIGFIVFFFCTYILLCEI). Residues 788–1182 (NKGAMQKGEI…VFEQNWRTPS (395 aa)) lie on the Cytoplasmic side of the membrane. An ABC transporter 2 domain is found at 846-1090 (FFWRDLTYQV…LINYFEKYGA (245 aa)). Residue 882 to 889 (GASGAGKT) coordinates ATP. The next 3 helical transmembrane spans lie at 1183–1203 (YLYSKFLLVVTSSLFNGFSFY), 1217–1237 (FSVFMFLVILHTLIQQYLPTF), and 1268–1288 (IPWNIICGTLGYFCWYYPVGL). N-linked (GlcNAc...) asparagine glycosylation occurs at Asn-1291. The next 3 helical transmembrane spans lie at 1304–1324 (FMWFAIVLFFIYTSTLAQLCI), 1333–1353 (AANLSVLLFTMCLAFCGVLVT), and 1370–1390 (FTYLVSVMLSVGLVDAPVTCA). Asn-1424 is a glycosylation site (N-linked (GlcNAc...) asparagine). A helical transmembrane segment spans residues 1455–1475 (IGIYIAFIGINIIGTFILYWF).

Belongs to the ABC transporter superfamily. ABCG family. PDR (TC 3.A.1.205) subfamily.

Its subcellular location is the membrane. This Candida albicans (Yeast) protein is ABC transporter CDR4 (CDR4).